Here is an 834-residue protein sequence, read N- to C-terminus: Unextended protein (834 aa).

The first 20 residues, 1–20 (MNTYFISFITIIIFANGING), serve as a signal peptide directing secretion. The Extracellular portion of the chain corresponds to 21 to 182 (TSVDTSNKLL…DFLKIKTFEP (162 aa)). N-linked (GlcNAc...) asparagine glycosylation is found at Asn38, Asn42, and Asn156. The CNNM transmembrane domain maps to 182-361 (PLIPVWLAII…NDVNDLDKNE (180 aa)). Residues 183 to 203 (LIPVWLAIIIIVTCLGFSALF) form a helical membrane-spanning segment. Over 204 to 244 (SGLNLGLMSMDRTELKILRNTGTEKEKKYASKIAPVRDQGN) the chain is Cytoplasmic. The helical transmembrane segment at 245-265 (YLLCSILLGNVLVNSTFTILL) threads the bilayer. At 266–267 (DG) the chain is on the extracellular side. A helical membrane pass occupies residues 268-288 (LTSGLFAVIFSTLAIVLFGEI). Residues 289 to 298 (TPQAVCSRHG) lie on the Cytoplasmic side of the membrane. Residues 299 to 319 (LAIGAKTILVTKTVMAITAPL) traverse the membrane as a helical segment. Residues 320–834 (SYPVSRILDK…DKFESKQSKP (515 aa)) are Extracellular-facing. 2 consecutive CBS domains span residues 380-441 (MTHI…NTPL) and 448-515 (YQNP…IVDE). Asn522 is a glycosylation site (N-linked (GlcNAc...) asparagine). 604–656 (YIFTQGKAVDFFVLILEGRVEVTIGKEALMFESGPFTYFGTQALVPNVVIDSP) contacts a nucleoside 3',5'-cyclic phosphate. The tract at residues 739–765 (CFAQNQSTRRLSNRSINSSPTNMNRSP) is disordered. Over residues 740 to 763 (FAQNQSTRRLSNRSINSSPTNMNR) the composition is skewed to polar residues. 3 N-linked (GlcNAc...) asparagine glycosylation sites follow: Asn743, Asn751, and Asn790. Residues 807 to 834 (SGEQDTTAASMPLLPKLDDKFESKQSKP) form a disordered region. Basic and acidic residues predominate over residues 822–834 (KLDDKFESKQSKP).

Belongs to the ACDP family. In terms of assembly, interacts with PRL-1, possibly at the plasma membrane.

Its subcellular location is the cell membrane. In terms of biological role, probable metal transporter. Acts downstream of PRL-1 and protects the nervous system against olfactory carbon dioxide stimulation. The polypeptide is Unextended protein (Drosophila melanogaster (Fruit fly)).